Consider the following 704-residue polypeptide: Pentatricopeptide repeat-containing protein At4g28010 (704 aa).

PPR repeat units follow at residues 71–105 (LAFA…DTFI), 106–140 (NFVS…GFAF), 141–175 (NVYN…SLMP), 176–210 (DVFS…GCSW), 211–245 (SLVT…GLEA), 246–280 (DLVV…GDSP), 281–315 (CAIT…GVRP), 316–350 (NVYT…DEEP), 351–385 (NAVT…RTRP), 386–416 (DNIT…MLKD), 423–453 (DVIS…LVEK), 458–492 (DRVT…KIVR), 493–527 (NSDT…ELQP), 528–562 (SVFD…NNFP), 563–597 (DVVS…GLSP), 598–632 (DLFT…GFEP), and 633–667 (DAHI…DIVL).

Belongs to the PPR family. P subfamily.

The protein is Pentatricopeptide repeat-containing protein At4g28010 of Arabidopsis thaliana (Mouse-ear cress).